The following is a 231-amino-acid chain: 5'-methylthioadenosine/S-adenosylhomocysteine nucleosidase (231 aa).

Catalysis depends on glutamate 12, which acts as the Proton acceptor. Substrate-binding positions include glycine 78, isoleucine 153, and 174-175; that span reads ME. Aspartate 198 functions as the Proton donor in the catalytic mechanism.

This sequence belongs to the PNP/UDP phosphorylase family. MtnN subfamily.

It catalyses the reaction S-adenosyl-L-homocysteine + H2O = S-(5-deoxy-D-ribos-5-yl)-L-homocysteine + adenine. The catalysed reaction is S-methyl-5'-thioadenosine + H2O = 5-(methylsulfanyl)-D-ribose + adenine. It carries out the reaction 5'-deoxyadenosine + H2O = 5-deoxy-D-ribose + adenine. The protein operates within amino-acid biosynthesis; L-methionine biosynthesis via salvage pathway; S-methyl-5-thio-alpha-D-ribose 1-phosphate from S-methyl-5'-thioadenosine (hydrolase route): step 1/2. Catalyzes the irreversible cleavage of the glycosidic bond in both 5'-methylthioadenosine (MTA) and S-adenosylhomocysteine (SAH/AdoHcy) to adenine and the corresponding thioribose, 5'-methylthioribose and S-ribosylhomocysteine, respectively. Also cleaves 5'-deoxyadenosine, a toxic by-product of radical S-adenosylmethionine (SAM) enzymes, into 5-deoxyribose and adenine. The protein is 5'-methylthioadenosine/S-adenosylhomocysteine nucleosidase of Shewanella putrefaciens (strain CN-32 / ATCC BAA-453).